The sequence spans 785 residues: Disintegrin and metalloproteinase domain-containing protein B (785 aa).

An N-terminal signal peptide occupies residues 1 to 26 (MRFLKSALPFVASALSLLSVQAAARS). The Extracellular segment spans residues 27 to 703 (QEPSAIQHVS…GSWVEQHKNL (677 aa)). Residues 279–507 (KQVALVGIAA…NSVKSSCLSD (229 aa)) form the Peptidase M12B domain. Asn-322, Asn-329, and Asn-355 each carry an N-linked (GlcNAc...) asparagine glycan. 2 cysteine pairs are disulfide-bonded: Cys-398–Cys-492 and Cys-446–Cys-464. His-429 lines the Zn(2+) pocket. The active site involves Glu-430. His-433 and His-439 together coordinate Zn(2+). The 90-residue stretch at 516-605 (GSQCGNGIVE…TCPADSFKKD (90 aa)) folds into the Disintegrin domain. N-linked (GlcNAc...) asparagine glycans are attached at residues Asn-561, Asn-593, and Asn-640. The cysteines at positions 577 and 597 are disulfide-linked. A helical membrane pass occupies residues 704–724 (VIGVACGVGGLLVLSILWCMI). The Cytoplasmic segment spans residues 725 to 785 (NRCRRARTVV…GPYQSATRYA (61 aa)). Residues 737-785 (PPMRPWPGPMPPPPPQMGQWAGPNRGYQGLRAEPPPPYPGPYQSATRYA) are disordered. Positions 739–752 (MRPWPGPMPPPPPQ) are enriched in pro residues.

It depends on Zn(2+) as a cofactor.

It is found in the membrane. Probable zinc protease. The polypeptide is Disintegrin and metalloproteinase domain-containing protein B (ADM-B) (Aspergillus fumigatus (strain ATCC MYA-4609 / CBS 101355 / FGSC A1100 / Af293) (Neosartorya fumigata)).